The following is a 310-amino-acid chain: Putative S-adenosyl-L-methionine-dependent methyltransferase MAP_2076c (310 aa).

Residues D131 and 160–161 each bind S-adenosyl-L-methionine; that span reads DL.

Belongs to the UPF0677 family.

In terms of biological role, exhibits S-adenosyl-L-methionine-dependent methyltransferase activity. The sequence is that of Putative S-adenosyl-L-methionine-dependent methyltransferase MAP_2076c from Mycolicibacterium paratuberculosis (strain ATCC BAA-968 / K-10) (Mycobacterium paratuberculosis).